The sequence spans 338 residues: Cytochrome P450 monooxygenase easK (338 aa).

Residues 1-16 (MLLLTFTLPVVTLLLA) form the signal peptide. 2 N-linked (GlcNAc...) asparagine glycosylation sites follow: asparagine 240 and asparagine 327.

The protein belongs to the cytochrome P450 family. Requires heme as cofactor.

It functions in the pathway alkaloid biosynthesis; ergot alkaloid biosynthesis. Functionally, cytochrome P450 monooxygenase; part of the gene cluster that mediates the biosynthesis of fumiclavanine C, a fungal ergot alkaloid. DmaW catalyzes the first step of ergot alkaloid biosynthesis by condensing dimethylallyl diphosphate (DMAP) and tryptophan to form 4-dimethylallyl-L-tryptophan. The second step is catalyzed by the methyltransferase easF that methylates 4-dimethylallyl-L-tryptophan in the presence of S-adenosyl-L-methionine, resulting in the formation of 4-dimethylallyl-L-abrine. The catalase easC and the FAD-dependent oxidoreductase easE then transform 4-dimethylallyl-L-abrine to chanoclavine-I which is further oxidized by EasD in the presence of NAD(+), resulting in the formation of chanoclavine-I aldehyde. EasA reduces chanoclavine-I aldehyde to dihydrochanoclavine-I aldehyde that spontaneously dehydrates to form 6,8-dimethyl-6,7-didehydroergoline. EasG then catalyzes the reduction of 6,8-dimethyl-6,7-didehydroergoline to form festuclavine. Hydrolysis of festuclavine by easM then leads to the formation of fumigaclavine B which is in turn acetylated by easN to fumigaclavine A. Finally, easL catalyzes the conversion of fumigaclavine A into fumigaclavine C by attaching a dimethylallyl moiety to C-2 of the indole nucleus. The role of the cytochrome P450 monooxygenase easK within the cluster has not been identified yet. This chain is Cytochrome P450 monooxygenase easK, found in Aspergillus fumigatus (strain ATCC MYA-4609 / CBS 101355 / FGSC A1100 / Af293) (Neosartorya fumigata).